A 226-amino-acid chain; its full sequence is ATP synthase F(0) complex subunit a (226 aa).

The next 6 helical transmembrane spans lie at 6–26 (FASFAAPTILGLPAAVLIILF), 68–88 (WSLMLVSLIIFIATTNLLGLL), 97–117 (QLSMNLAMAIPLWAGTVVMGF), 138–158 (IPMLIIIETISLFIQPMALAV), 164–184 (ITAGHLLMHLIGSATLALSTI), and 189–209 (TLIIFTILILLTVLEIAVALI).

Belongs to the ATPase A chain family. In terms of assembly, component of the ATP synthase complex composed at least of ATP5F1A/subunit alpha, ATP5F1B/subunit beta, ATP5MC1/subunit c (homooctomer), MT-ATP6/subunit a, MT-ATP8/subunit 8, ATP5ME/subunit e, ATP5MF/subunit f, ATP5MG/subunit g, ATP5MK/subunit k, ATP5MJ/subunit j, ATP5F1C/subunit gamma, ATP5F1D/subunit delta, ATP5F1E/subunit epsilon, ATP5PF/subunit F6, ATP5PB/subunit b, ATP5PD/subunit d, ATP5PO/subunit OSCP. ATP synthase complex consists of a soluble F(1) head domain (subunits alpha(3) and beta(3)) - the catalytic core - and a membrane F(0) domain - the membrane proton channel (subunits c, a, 8, e, f, g, k and j). These two domains are linked by a central stalk (subunits gamma, delta, and epsilon) rotating inside the F1 region and a stationary peripheral stalk (subunits F6, b, d, and OSCP). Interacts with DNAJC30; interaction is direct.

The protein resides in the mitochondrion inner membrane. It catalyses the reaction H(+)(in) = H(+)(out). Its function is as follows. Subunit a, of the mitochondrial membrane ATP synthase complex (F(1)F(0) ATP synthase or Complex V) that produces ATP from ADP in the presence of a proton gradient across the membrane which is generated by electron transport complexes of the respiratory chain. ATP synthase complex consist of a soluble F(1) head domain - the catalytic core - and a membrane F(1) domain - the membrane proton channel. These two domains are linked by a central stalk rotating inside the F(1) region and a stationary peripheral stalk. During catalysis, ATP synthesis in the catalytic domain of F(1) is coupled via a rotary mechanism of the central stalk subunits to proton translocation. With the subunit c (ATP5MC1), forms the proton-conducting channel in the F(0) domain, that contains two crucial half-channels (inlet and outlet) that facilitate proton movement from the mitochondrial intermembrane space (IMS) into the matrix. Protons are taken up via the inlet half-channel and released through the outlet half-channel, following a Grotthuss mechanism. This is ATP synthase F(0) complex subunit a from Pan paniscus (Pygmy chimpanzee).